The sequence spans 82 residues: Lysis inhibition accessory protein (82 aa).

It belongs to the T4likevirus lysis inhibition accessory protein rIII family. In terms of assembly, homooligomer. Interacts with holin (via N-terminus).

Functionally, probably binds to the cytoplasmic part of the holin during lysis inhibition and stabilizes the holin-antiholin complex thereby resulting in a robust block of the hole formation. The polypeptide is Lysis inhibition accessory protein (rIII) (Escherichia coli (Bacteriophage T4)).